A 373-amino-acid chain; its full sequence is Chaperone protein DnaJ (373 aa).

Residues 4–68 form the J domain; it reads DYYEILGLTK…VKREQYNQFG (65 aa). The CR-type zinc-finger motif lies at 142 to 224; sequence GKEIVEPLEK…CKGKTHTKTT (83 aa). Residues Cys-155, Cys-158, Cys-172, Cys-175, Cys-198, Cys-201, Cys-212, and Cys-215 each contribute to the Zn(2+) site. CXXCXGXG motif repeat units follow at residues 155-162, 172-179, 198-205, and 212-219; these read CNTCNGSG, CTQCSGMG, CSKCNGIG, and CLICKGKT.

The protein belongs to the DnaJ family. Homodimer. It depends on Zn(2+) as a cofactor.

The protein resides in the cytoplasm. In terms of biological role, participates actively in the response to hyperosmotic and heat shock by preventing the aggregation of stress-denatured proteins and by disaggregating proteins, also in an autonomous, DnaK-independent fashion. Unfolded proteins bind initially to DnaJ; upon interaction with the DnaJ-bound protein, DnaK hydrolyzes its bound ATP, resulting in the formation of a stable complex. GrpE releases ADP from DnaK; ATP binding to DnaK triggers the release of the substrate protein, thus completing the reaction cycle. Several rounds of ATP-dependent interactions between DnaJ, DnaK and GrpE are required for fully efficient folding. Also involved, together with DnaK and GrpE, in the DNA replication of plasmids through activation of initiation proteins. The chain is Chaperone protein DnaJ from Mycoplasma mobile (strain ATCC 43663 / 163K / NCTC 11711) (Mesomycoplasma mobile).